The primary structure comprises 85 residues: uncharacterized protein (85 aa).

This sequence belongs to the BolA/IbaG family.

This is an uncharacterized protein from Haemophilus influenzae (strain ATCC 51907 / DSM 11121 / KW20 / Rd).